The primary structure comprises 313 residues: Heterogeneous nuclear ribonucleoproteins C1/C2 (313 aa).

Alanine 2 is modified (N-acetylalanine). Glycyl lysine isopeptide (Lys-Gly) (interchain with G-Cter in SUMO2) cross-links involve residues lysine 8, lysine 50, lysine 89, and lysine 94. In terms of domain architecture, RRM spans 16–87 (SRVFIGNLNT…QVLDINLAAE (72 aa)). 3 positions are modified to phosphoserine: serine 113, serine 115, and serine 121. 2 disordered regions span residues 139–191 (YPAR…KLKG) and 219–313 (EKEQ…EDDS). The Nuclear localization signal motif lies at 155–161 (PSKRQRV). 2 positions are modified to phosphoserine: serine 162 and serine 166. Positions 175-186 (SKSGQRGSSSKS) are enriched in low complexity. Lysine 176 is modified (N6-acetyllysine; alternate). Lysine 176 is covalently cross-linked (Glycyl lysine isopeptide (Lys-Gly) (interchain with G-Cter in SUMO2); alternate). Residues 191–226 (GDDLQAIKKELTQIKQKVDSLLESLEKIEKEQSKQA) adopt a coiled-coil conformation. Lysine 224 participates in a covalent cross-link: Glycyl lysine isopeptide (Lys-Gly) (interchain with G-Cter in SUMO2). A phosphoserine mark is found at serine 229, serine 231, and serine 232. Residue lysine 237 forms a Glycyl lysine isopeptide (Lys-Gly) (interchain with G-Cter in SUMO2) linkage. A Glycyl lysine isopeptide (Lys-Gly) (interchain with G-Cter in SUMO2); alternate cross-link involves residue lysine 240. Residue lysine 240 forms a Glycyl lysine isopeptide (Lys-Gly) (interchain with G-Cter in SUMO1); alternate linkage. Residues serine 241, serine 246, serine 247, and serine 249 each carry the phosphoserine modification. The span at 250–261 (VKKDETNVKMES) shows a compositional bias: basic and acidic residues. Residues lysine 251 and lysine 252 each participate in a glycyl lysine isopeptide (Lys-Gly) (interchain with G-Cter in SUMO2) cross-link. Lysine 258 is covalently cross-linked (Glycyl lysine isopeptide (Lys-Gly) (interchain with G-Cter in SUMO2); alternate). Lysine 258 participates in a covalent cross-link: Glycyl lysine isopeptide (Lys-Gly) (interchain with G-Cter in SUMO); alternate. Serine 261 and serine 268 each carry phosphoserine. The span at 263–284 (AGADDSAEEGDLLDDDDNEDRG) shows a compositional bias: acidic residues. Basic and acidic residues predominate over residues 285–294 (DDQLELKDDE). Residues 295-313 (KEPEEGEDDRDSANGEDDS) show a composition bias toward acidic residues. 2 positions are modified to phosphoserine: serine 306 and serine 313.

Belongs to the RRM HNRPC family. RALY subfamily. As to quaternary structure, tetramer composed of 3 copies of isoform C1 and 1 copy of isoform C2. Assembly of 3 tetramers with bound pre-mRNA gives rise to a 19S complex that interacts with HNRNPA2B1 tetramers. Component of the 40S hnRNP particle. Identified in the spliceosome C complex. Interacts with IGF2BP1. Interacts with DHX9; this interaction is direct, enhanced probably by their concomitant binding to RNA and mediates the attachment to actin filaments. Interacts with PPIA/CYPA. Phosphorylated on Ser-268 and Ser-306 in resting cells. In terms of processing, sumoylated. Sumoylation reduces affinity for mRNA. Post-translationally, ubiquitinated and degraded after nucleo-cytoplasmic transport by YWHAE.

It is found in the nucleus. In terms of biological role, binds pre-mRNA and nucleates the assembly of 40S hnRNP particles. Interacts with poly-U tracts in the 3'-UTR or 5'-UTR of mRNA and modulates the stability and the level of translation of bound mRNA molecules. Single HNRNPC tetramers bind 230-240 nucleotides. Trimers of HNRNPC tetramers bind 700 nucleotides. May play a role in the early steps of spliceosome assembly and pre-mRNA splicing. N6-methyladenosine (m6A) has been shown to alter the local structure in mRNAs and long non-coding RNAs (lncRNAs) via a mechanism named 'm(6)A-switch', facilitating binding of HNRNPC, leading to regulation of mRNA splicing. This Mus musculus (Mouse) protein is Heterogeneous nuclear ribonucleoproteins C1/C2 (Hnrnpc).